The sequence spans 24 residues: Humanin-like 3 (24 aa).

The protein belongs to the humanin family. In terms of tissue distribution, highly expressed in testis. Also expressed in kidney, heart, skeletal muscles and brain.

It is found in the secreted. The protein resides in the cytoplasm. In terms of biological role, plays a role as a neuroprotective and antiapoptotic factor. The sequence is that of Humanin-like 3 from Homo sapiens (Human).